A 13041-amino-acid chain; its full sequence is Nonribosomal peptide synthetase kk1B (13041 aa).

The adenylation 1 stretch occupies residues 267-663 (ANRVVDTPQK…GRRDSQIKIR (397 aa)). A Carrier 1 domain is found at 788-864 (ASLMTEGITL…GLINVMQQSS (77 aa)). At Ser-825 the chain carries O-(pantetheine 4'-phosphoryl)serine. The tract at residues 882–1313 (SFAQGRLWFL…TPIAHLQLTD (432 aa)) is condensation 1. Residues 1341 to 1736 (FQKQVAACPN…GRMDFQIKIR (396 aa)) form an adenylation 2 region. The 75-residue stretch at 1865–1939 (AARNEIEAVL…NLAATIKRGS (75 aa)) folds into the Carrier 2 domain. Ser-1899 is subject to O-(pantetheine 4'-phosphoryl)serine. The segment at 1957–2383 (SFAQGRLWFL…DQPQTPLALL (427 aa)) is condensation 2. The adenylation 3 stretch occupies residues 2418–2812 (QVAASPNATA…GRMDQQIKIR (395 aa)). Residues 2891–3023 (VGNDFMGWTS…EYLSKVLYAL (133 aa)) form a methyltransferase (M) domain 1 region. The region spanning 3353–3427 (GARNETEAVL…DLAASIRRGS (75 aa)) is the Carrier 3 domain. The residue at position 3387 (Ser-3387) is an O-(pantetheine 4'-phosphoryl)serine. The tract at residues 3445-3869 (SFAQGRLWFL…DQPQIPIAVL (425 aa)) is condensation 3. The segment at 3901–4300 (FRAQVVACPD…GRMDQQVKIR (400 aa)) is adenylation 4. The 75-residue stretch at 4412-4486 (PPRNEIETIL…NLAAAVQRGS (75 aa)) folds into the Carrier 4 domain. At Ser-4446 the chain carries O-(pantetheine 4'-phosphoryl)serine. The condensation 4 stretch occupies residues 4504-4935 (SFAQGRLWFL…TPIAALSLTD (432 aa)). The interval 4963–5362 (FREQVATYPD…GRMDRQLKIR (400 aa)) is adenylation 5. Residues 5430-5567 (TYAELDTLVK…VAQYFPTPEY (138 aa)) are methyltransferase (M) domain 2. The Carrier 5 domain occupies 5897–5971 (QPRNEVEAVL…DLAAAIQRGS (75 aa)). Ser-5931 bears the O-(pantetheine 4'-phosphoryl)serine mark. A condensation 5 region spans residues 5989 to 6416 (SYAQGRLWFL…DQPQTPLALL (428 aa)). The segment at 6451 to 6845 (QVAASPNATA…GRMDQQIKIR (395 aa)) is adenylation 6. Residues 6924–7056 (VGNDFMGWTS…EYLSKVLYAL (133 aa)) are methyltransferase (M) domain 3. Residues 7386-7460 (GARNEIEAAL…DLAGAVQRGS (75 aa)) enclose the Carrier 6 domain. The residue at position 7420 (Ser-7420) is an O-(pantetheine 4'-phosphoryl)serine. Residues 7478-7901 (SFAQGRLWFL…GLETPRLPIS (424 aa)) are condensation 6. Residues 7934–8335 (FRTQVAASPD…GRMDRQLKIR (402 aa)) form an adenylation 7 region. Positions 8404–8540 (YAEIEEIDSS…AQYFPSPEYL (137 aa)) are methyltransferase (M) domain 4. The Carrier 7 domain maps to 8871–8945 (GPRNEIEALL…DLAASIQRGS (75 aa)). Ser-8905 is modified (O-(pantetheine 4'-phosphoryl)serine). Residues 8963–9392 (SFAQGRLWFL…PKTPIAVLPL (430 aa)) form a condensation 7 region. An adenylation 8 region spans residues 9422–9822 (FRQQVAARPD…SRMDQQVKIR (401 aa)). The Carrier 8 domain occupies 9943 to 10017 (PPTNDMERIL…DLASTIKQDS (75 aa)). The residue at position 9977 (Ser-9977) is an O-(pantetheine 4'-phosphoryl)serine. The tract at residues 10035-10462 (SFAQGRLWFL…ETPQTPLAVL (428 aa)) is condensation 8. The adenylation 9 stretch occupies residues 10494–10892 (FRAQVAACPD…GRMDQQIKIR (399 aa)). The tract at residues 10959–11105 (IYAEIEEIDS…EYLADVVGAL (147 aa)) is methyltransferase (M) domain 5. Residues 11428–11502 (SARNEVEAVL…DLAASIERNS (75 aa)) enclose the Carrier 9 domain. An O-(pantetheine 4'-phosphoryl)serine modification is found at Ser-11462. A condensation 9 region spans residues 11520-11945 (SFAQGRLWFL…EQPQTPIAVL (426 aa)). The interval 11977–12377 (FRDQVAANPR…GRMDQQIKIR (401 aa)) is adenylation 10. The Carrier 10 domain maps to 12495–12569 (VPRNELEASL…DLALKVSSYI (75 aa)). The residue at position 12529 (Ser-12529) is an O-(pantetheine 4'-phosphoryl)serine. The condensation 10 stretch occupies residues 12647–13032 (FPANADCDKI…RMHEEFCDII (386 aa)).

The protein belongs to the NRP synthetase family.

The protein operates within secondary metabolite biosynthesis. Functionally, nonribosomal peptide synthetase; part of the gene cluster that mediates the biosynthesis of KK-1, a novel cyclic depsipeptide with 10 residues which is a promising active compound with high activity against many plant pathogens, especially Botrytis cinerea. The nonribosomal peptide synthetase (NRPS) kk1B catalyzes the elongation and cyclization of the decapeptide chain composed of 1 D-lactic acid residue (D-Lac), 1 pipecolic acid residue (Pip), 1 aspartic acid residue (Asp), 1 isoleucine residue (Ile), 1 glycine residue (Gly), 1 tyrosine residue (Tyr) and 4 valine residues (Val). The Asp, Ile and 3 Val residues are N-methylated by the 5 methyltransferase domains from the NRPS (found in modules 3, 5, 6, 7 and 9), whereas the Tyr residue is O-methylated by the cluster encoded O-methyltransferase kk1A. Cyclization with the hydroxy group of the D-lactic acid as a nucleophile is presumed to occur in the final module of NRPS, resulting in the formation of the depsipeptide ester bond through macrocyclization by the C-terminal C domain. The thioesterase kk1J is likely to be involved in the corrective mechanism of peptide chain synthesis. The D-lactate dehydrogenase kk1H is involved in the synthesis of D-lactic acid from pyruvic acid, which is recognized by the A domain of the first kk1B module. The pyrroline-5-carboxylate reductase kk1I is involved in the synthesis of the L-pipecolic acid residue of KK-1 from delta-1-pyrroline-5-carboxylate (P5C), a metabolic intermediate of lysine. It is still unclear how kk1C and kk1D are involved in the production of KK-1. The protein is Nonribosomal peptide synthetase kk1B of Curvularia clavata.